The following is a 416-amino-acid chain: Enolase (416 aa).

Q162 provides a ligand contact to (2R)-2-phosphoglycerate. E204 functions as the Proton donor in the catalytic mechanism. D241, E282, and D309 together coordinate Mg(2+). (2R)-2-phosphoglycerate-binding residues include K334, R363, S364, and K385. K334 functions as the Proton acceptor in the catalytic mechanism.

Belongs to the enolase family. Requires Mg(2+) as cofactor.

The protein localises to the cytoplasm. Its subcellular location is the secreted. The protein resides in the cell surface. It carries out the reaction (2R)-2-phosphoglycerate = phosphoenolpyruvate + H2O. The protein operates within carbohydrate degradation; glycolysis; pyruvate from D-glyceraldehyde 3-phosphate: step 4/5. Functionally, catalyzes the reversible conversion of 2-phosphoglycerate (2-PG) into phosphoenolpyruvate (PEP). It is essential for the degradation of carbohydrates via glycolysis. The sequence is that of Enolase from Campylobacter concisus (strain 13826).